We begin with the raw amino-acid sequence, 600 residues long: Transcription factor efl-3 (600 aa).

The segment at leucine 35–glutamine 65 is disordered. Residues arginine 39 to asparagine 50 show a composition bias toward basic and acidic residues. 2 consecutive DNA-binding regions follow at residues arginine 95–glycine 164 and arginine 253–glycine 343.

Belongs to the E2F/DP family.

It is found in the nucleus. Probable transcription factor which represses gene expression in a subset of ventral nerve cord neurons. Involved in regulating programmed cell death and determining cell fate during development, acting in a partially redundant manner with lin-39 to repress the BH3 domain-encoding gene egl-1 in the VA and VB motor neurons. The chain is Transcription factor efl-3 from Caenorhabditis elegans.